The primary structure comprises 229 residues: Methyltransferase ctvB (229 aa).

It belongs to the methyltransferase superfamily.

It functions in the pathway mycotoxin biosynthesis. In terms of biological role, methyltransferase; part of the gene cluster that mediates the biosynthesis of citreoviridin, an inhibitor of the of F1-ATPase beta-subunit. The HR-PKS ctvA accepts acetyl-CoA as the starter unit and catalyzes eight iterations of malonyl-CoA extension and four iterations of SAM-dependent methylation at C4, C12, C14, and C16. The KR and DH domains selectively act on the first six iterations to generate the hexaene chain. In the last three iterations, the KR and DH domains terminate their functions to yield a beta,delta-diketo ester moiety, which then undergoes intramolecular cyclization to yield an alpha-pyrone intermediate. Subsequently, ctvB methylates the alpha-pyrone hydroxyl group to generate citreomontanin. In order to form the tetrahydrofuran ring with the correct stereochemistry, the terminal alkenes of citreomontanin need to undergo isomerization to yield a (17Z)-hexaene, a step that could be catalyzed by ctvC. The (17Z)-hexaene then undergoes bisepoxidation by ctvC to form a (17R,16R,15S,14R)-bisepoxide moiety. Lastly, ctvD acts as a regioselective hydrolase to form the tetrahydrofuran ring with the substituents in the correct absolute configuration, completing the biosynthesis of citreoviridin. This chain is Methyltransferase ctvB, found in Aspergillus terreus (strain NIH 2624 / FGSC A1156).